The chain runs to 370 residues: Phosphate acyltransferase (370 aa).

This sequence belongs to the PlsX family. As to quaternary structure, homodimer. Probably interacts with PlsY.

The protein localises to the cytoplasm. The enzyme catalyses a fatty acyl-[ACP] + phosphate = an acyl phosphate + holo-[ACP]. Its pathway is lipid metabolism; phospholipid metabolism. In terms of biological role, catalyzes the reversible formation of acyl-phosphate (acyl-PO(4)) from acyl-[acyl-carrier-protein] (acyl-ACP). This enzyme utilizes acyl-ACP as fatty acyl donor, but not acyl-CoA. This chain is Phosphate acyltransferase, found in Polaromonas naphthalenivorans (strain CJ2).